Reading from the N-terminus, the 663-residue chain is Bifunctional polymyxin resistance protein ArnA (663 aa).

The interval methionine 1 to leucine 304 is formyltransferase ArnAFT. The Proton donor; for formyltransferase activity role is filled by histidine 104. (6R)-10-formyltetrahydrofolate is bound by residues arginine 114 and threonine 136–aspartate 140. Residues arginine 316–aspartate 663 form a dehydrogenase ArnADH region. NAD(+) contacts are provided by residues aspartate 349 and aspartate 370–isoleucine 371. UDP-alpha-D-glucuronate is bound by residues alanine 395, tyrosine 400, and threonine 434–serine 435. The active-site Proton acceptor; for decarboxylase activity is the glutamate 436. Residues arginine 462, asparagine 494, glutamine 528–arginine 537, and tyrosine 615 contribute to the UDP-alpha-D-glucuronate site. Residue arginine 621 is the Proton donor; for decarboxylase activity of the active site.

This sequence in the N-terminal section; belongs to the Fmt family. UDP-L-Ara4N formyltransferase subfamily. It in the C-terminal section; belongs to the NAD(P)-dependent epimerase/dehydratase family. UDP-glucuronic acid decarboxylase subfamily. Homohexamer, formed by a dimer of trimers.

The enzyme catalyses UDP-alpha-D-glucuronate + NAD(+) = UDP-beta-L-threo-pentopyranos-4-ulose + CO2 + NADH. It carries out the reaction UDP-4-amino-4-deoxy-beta-L-arabinose + (6R)-10-formyltetrahydrofolate = UDP-4-deoxy-4-formamido-beta-L-arabinose + (6S)-5,6,7,8-tetrahydrofolate + H(+). It functions in the pathway nucleotide-sugar biosynthesis; UDP-4-deoxy-4-formamido-beta-L-arabinose biosynthesis; UDP-4-deoxy-4-formamido-beta-L-arabinose from UDP-alpha-D-glucuronate: step 1/3. Its pathway is nucleotide-sugar biosynthesis; UDP-4-deoxy-4-formamido-beta-L-arabinose biosynthesis; UDP-4-deoxy-4-formamido-beta-L-arabinose from UDP-alpha-D-glucuronate: step 3/3. The protein operates within bacterial outer membrane biogenesis; lipopolysaccharide biosynthesis. Its function is as follows. Bifunctional enzyme that catalyzes the oxidative decarboxylation of UDP-glucuronic acid (UDP-GlcUA) to UDP-4-keto-arabinose (UDP-Ara4O) and the addition of a formyl group to UDP-4-amino-4-deoxy-L-arabinose (UDP-L-Ara4N) to form UDP-L-4-formamido-arabinose (UDP-L-Ara4FN). The modified arabinose is attached to lipid A and is required for resistance to polymyxin and cationic antimicrobial peptides. The sequence is that of Bifunctional polymyxin resistance protein ArnA from Aeromonas salmonicida (strain A449).